The following is a 517-amino-acid chain: Recombining binding protein suppressor of hairless-like protein (517 aa).

A compositionally biased stretch (basic and acidic residues) spans 26–37 (EMQLQSEADRRS). The interval 26 to 48 (EMQLQSEADRRSLPGTWTRSSPE) is disordered. 3 DNA-binding regions span residues 78–88 (QKSYGNEKRFF), 193–198 (SKPSQK), and 220–225 (RLRSQT). Residues 387 to 512 (LISTLELSGG…HQEFTRTNFH (126 aa)) enclose the IPT/TIG domain.

The protein belongs to the Su(H) family. As to quaternary structure, interacts weakly with EBNA2. Does not interact with any Notch proteins.

The protein resides in the nucleus. Putative transcription factor, which cooperates with EBNA2 to activate transcription. The polypeptide is Recombining binding protein suppressor of hairless-like protein (RBPJL) (Homo sapiens (Human)).